We begin with the raw amino-acid sequence, 1121 residues long: MLRRFSSTFKKKGDRESKQNGTASSSSAAVANTNNNDNKRHSKISAARKSSSDDDRNEKKGNSVSPFEKYASVLHASRSPIPNQTGDGAYLEHEHTTSLLQDARHLGFKDFKTLKEVIESKLPGGQLIDDKTMLMERIIQLVSRLPHNSKHREELTNAFLTELWDSLPHPPLSYMGNDYAYRSADGSNNNPTLPRLGAANTLYARTIPPLIIQPGGLPDPGLVFDTLFARQTFKPHPNKVSSVFFYWASLIIHDIFQTDYKNPNMNKTSGYLDLSILYGDVQEEQNLIRTFKDGKLKPDSFSEPRLQAFPATCCVLMVMLNRFHNYAVEQLAAINENGRFTKPADNLSEEEAKKAWAKYDEDLFQTGRLITCGLYINITLYDYLRTIVNLNRTNSTWCLDPRAQMEGSHTAPSGLGNQCSVEFNLAYRWHSATSATDEKWTEDVYERLMGKPASEVSMTELLMGLGKYQAELPKDPSKRTFADLERQADGRFKDEDLVNLLVNAVEDVAGSFGARNVPKVLKNVEILGIIQSRKWNVGSLNEFRKFFGLKPYETFEEINSDPDVAESLRSLYDHPDFVELYPGIVAEEAKQPMVPGVGIAPTYTISRAVLSDAVALVRGDRFYTIDYNPRNLTNWGYSEVRYDLSINQGCIFYKLATRAFPNWFKPDSIYAHYPMTIPSENRKIMKDLGREIHYSWDRPQYTPPRVDLVSYSNAKLVAEQQNQFRAAWGDTVEFVFGKASKEFKLYQDSAFIQKHADVMSKLLNKEEWHRSVKEFYEDITAKLLEDKTRRFGGINQVDITNDVGNLTPVIFAANVFSLPLKSKENPRGIYTEHEMFKVLAALYNCLYFDIDKTKSYPLHHASQAVGEPLGKALEANVKALGGSSLLSGIFRSFRENKNALKEYGVHLTKQLLENGLGAHEIAWAQFLPTVIAMVPAQAQAFTQIVDFYLSKEGSKHLPAIQRLAKQDTKKSDEQLLHYCLEAVRLNDMSGLYRQSETTLAVTDEAVEVTIQPGDKVFVSFAKANRDASVFPDPAEVRLDRPMNSYINPTLGPHGFLSKETSHIALTAMLRAVGRLNNLRVAPGVQGQLKKIPQPGGYSAYLREDHGSYSIFPTTFRVQYDA.

The tract at residues 1-66 is disordered; that stretch reads MLRRFSSTFK…NEKKGNSVSP (66 aa). Residues 22–36 are compositionally biased toward low complexity; the sequence is TASSSSAAVANTNNN. The span at 50-61 shows a compositional bias: basic and acidic residues; that stretch reads SSSDDDRNEKKG. The active-site Proton acceptor is the histidine 253. Residues aspartate 254, serine 269, tyrosine 271, aspartate 273, and serine 275 each contribute to the Ca(2+) site.

It belongs to the peroxidase family.

The catalysed reaction is (9Z,12Z)-octadecadienoate + O2 = (8E,10R,12Z)-10-hydroperoxyoctadeca-8,12-dienoate. Its function is as follows. Responsible for the synthesis of various fatty acid-derived oxylipins. Oxidizes linoleic acid primarily to 10R-hydroperoxy-8,12-octadecadienoic acid (10R-HPODE) and, to a lesser extent, 8R-hydroperoxylinoleic acid (8R-HPODE). Also synthesizes 10-hydroxy-octadeca-8,12-dienoic acid (10-HODE) from linoleic acid and primarily 8R-hydroxy-octadeca-9-monoenoic acid (8-HOME, also known as psiB beta) from oleic acid. 8-HOME forms part of psi factor, a mixture of oxylipins that regulates the balance between sexual and asexual spore production. Displays epoxyalcohol synthase activity. Plays a role in the synthesis of prostaglandins which may be required for pathogenicity. This chain is Linoleate 10R-lipoxygenase, found in Aspergillus fumigatus (strain ATCC MYA-4609 / CBS 101355 / FGSC A1100 / Af293) (Neosartorya fumigata).